We begin with the raw amino-acid sequence, 833 residues long: Protein PAT1 homolog 1 (833 aa).

Disordered regions lie at residues Asp279 to Met313, Asn398 to Pro427, and Glu492 to Leu549. A compositionally biased stretch (low complexity) spans Pro303 to Met313. The span at Asn398–His408 shows a compositional bias: polar residues.

It belongs to the PAT1 family.

Its subcellular location is the cytoplasm. The protein localises to the P-body. In terms of biological role, RNA-binding protein involved in deadenylation-dependent decapping of mRNAs, leading to the degradation of mRNAs. Acts as a scaffold protein that connects deadenylation and decapping machinery. Required for the recruitment of P-body components such as cgh-1 in somatic blastomeres. May play a role in recruiting the decapping enzyme dcap-1 to cytoplasmic puncta in the cell body of the posterior touch receptor neuron, PLM. In Caenorhabditis elegans, this protein is Protein PAT1 homolog 1.